The sequence spans 127 residues: Protein NEGATIVE REGULATOR OF RESISTANCE (127 aa).

2 disordered regions span residues 1 to 28 (MDATTTAKRKRPAASDIADDAPTTVDEV) and 47 to 127 (TRRL…RAPA). Residues 112 to 127 (PPSDAPATPRSARAPA) show a composition bias toward low complexity.

This sequence belongs to the NPR1-interactor family. In terms of assembly, interacts with NPR1/NH1. Interacts with NPR3/NH3.

Its subcellular location is the nucleus. Its function is as follows. Acts as a negative regulator of disease resistance. Acts on basal resistance, age-related resistance and resistance mediated by the LRR receptor kinase XA21. Plants over-expressing NRR display enhanced susceptibility to the bacterial blight Xanthomonas oryzae pv. oryzae (Xoo). Binds to and represses NPR1/NH1-mediated transcriptional activation of LG2 in vitro. This Oryza sativa subsp. japonica (Rice) protein is Protein NEGATIVE REGULATOR OF RESISTANCE.